The chain runs to 436 residues: Ribosomal protein uS12 methylthiotransferase RimO (436 aa).

One can recognise an MTTase N-terminal domain in the interval 2–117; sequence KNVGIISLGC…IAEVIEKIEK (116 aa). [4Fe-4S] cluster is bound by residues C11, C47, C80, C154, C158, and C161. The Radical SAM core domain occupies 140–369; sequence TTPNYYAYLK…MEIQKEISYQ (230 aa). One can recognise a TRAM domain in the interval 372-436; it reads LSKVGKQLEV…AYEYDLVGEY (65 aa).

This sequence belongs to the methylthiotransferase family. RimO subfamily. Requires [4Fe-4S] cluster as cofactor.

It is found in the cytoplasm. It catalyses the reaction L-aspartate(89)-[ribosomal protein uS12]-hydrogen + (sulfur carrier)-SH + AH2 + 2 S-adenosyl-L-methionine = 3-methylsulfanyl-L-aspartate(89)-[ribosomal protein uS12]-hydrogen + (sulfur carrier)-H + 5'-deoxyadenosine + L-methionine + A + S-adenosyl-L-homocysteine + 2 H(+). Functionally, catalyzes the methylthiolation of an aspartic acid residue of ribosomal protein uS12. This Thermoanaerobacter sp. (strain X514) protein is Ribosomal protein uS12 methylthiotransferase RimO.